The chain runs to 355 residues: Probable nitronate monooxygenase (355 aa).

Residues Asn-71, Gln-175, Gly-180, Gly-219, and 238-241 contribute to the FMN site; that span reads QMGT.

This sequence belongs to the nitronate monooxygenase family. NMO class I subfamily. The cofactor is FMN.

The catalysed reaction is 3 propionate 3-nitronate + 3 O2 + H2O = 3 3-oxopropanoate + 2 nitrate + nitrite + H2O2 + 3 H(+). Nitronate monooxygenase that uses molecular oxygen to catalyze the oxidative denitrification of alkyl nitronates. Acts on propionate 3-nitronate (P3N), the presumed physiological substrate. Probably functions in the detoxification of P3N, a metabolic poison produced by plants and fungi as a defense mechanism. In Staphylococcus saprophyticus subsp. saprophyticus (strain ATCC 15305 / DSM 20229 / NCIMB 8711 / NCTC 7292 / S-41), this protein is Probable nitronate monooxygenase.